The following is a 1404-amino-acid chain: MVLLCKYKVSWVFVLSVAGSSLIRDFLFGQDDSLSIEKRTNEYTTPEYGGTSHCNGGDKNCYPQCFDHRGQPKKDKCCFDKHNKVLYPYPCTSSSSSSSSSSTVSSSSSEVISSSSEEASSSEITSSSEISSSSEVSSSSEVLSSSEIISSSSEVVSSSSKVSSSSEATSSSSEIISSSSEVVSSSSQVTSSSEVVSSSSEVVSSSSEVSSSSEVVSSSSEVSSSSEVSSSSEVSSSSQVTSSSEIVSSSSEVSSSSSEVVSSSSEVSSSSEVVSSSSEVSSSSEVSSSSEVSSSSEVSSSSEVSSSSQVISSSEVVSSSSEVVSSSSEVSSSSEVSSSSEVVSSSSEVSSSSEVSSSSEVSSSSQVTSSSEIVSSSSEVSSSSSEVVSSSSEVSSSSEVVSSSSEVSSSSEVSSSSEVSSSSEVSSSSEVSSSSQVTSSSEVVSSSSEVSSSSEVVSSSSEVSSSSEVSSSSEVSSSSQVTSSSEIVSSSSEVSSSSSEVVSSSSEVSSSSEVVSSSSEVSSSSEVSSSSEVSSSSQVTSSSEIVSSSSEVSSSSSEVVSSSSEVSSSSEVVSSSSEVSSSSEVSSSSEVSSSSQVTSSSEVVSSSSEVVSSSSEVSSSSEVSSSSEVSSSSEVSSSSEVSSSSQVTSSSEIVSSSSEVSSSSSEVVSSSSEVSSSSEVVSSSSEVSSSSEVSSSSEVSSSSQVTSSSEVVSSSSEVVSSSSEVSSSSEVSSSSEVSSSSEVSSSSEVSSSSEVTSSSSEIISSSSSSEVTSSSEVSSSSQATSSSSEIISSSSKVSSSSEITSSSECISSTSEVNSSSSEVVSSSSASSEVVSSSTECISSSSEAISSSSQVTSSSTECISSSSEVISSSEVTSCSSEVVSSSETCISSKEMSSSEQISSSESTSSCSEFVSKSSEHSSLSSESCPSEETSTVSETSSETVTCKHHGCSKTKTHHSTPTKCVTKTIETSVYVTTCPDKSITTETAVVIVVTNESTATTYTEIIKTTVIEGNTLTTNIPIKHVETETAEIIEYTTICPTTLPNGHKTTVIAGIAVGTNGQGQKVTKTVPLEYNESTLANGHVTRVASGIVKATGENGEEITKTIPIEYRKTTERIEFITVCPTTLANGQVIETTAGIVITTNKQGEKVTKPVPLEFTSTIEFSHHLTTHPVTLPNGQITVTTEGVIITRKGEQQFTKTVEVGNLPSKPIEVVQKISVVPKTLPNSQVTSETVAILVTVGEELQPITKTIPIGTSAQETEPSFASYSEIVFTTCSEGGCNTYTTNVEVIGNKVITKQSGKPIVEEQTTNGIEHQSDKVYYTVVSGETKTIQTPGSIVSTSPAAIPVVTSKGSPNIVGSSVVAGSSVTTSEVSTSTAGVLQGNAASRQSFNYKFIVGLILAYIIA.

A signal peptide spans 1-19 (MVLLCKYKVSWVFVLSVAG). A run of 87 repeats spans residues 104–109 (VSSSSS), 136–141 (VSSSSE), 156–161 (VSSSSK), 162–167 (VSSSSE), 183–188 (VSSSSQ), 196–201 (VSSSSE), 203–208 (VSSSSE), 209–214 (VSSSSE), 216–221 (VSSSSE), 222–227 (VSSSSE), 228–233 (VSSSSE), 234–239 (VSSSSQ), 247–252 (VSSSSE), 253–258 (VSSSSS), 261–266 (VSSSSE), 267–272 (VSSSSE), 274–279 (VSSSSE), 280–285 (VSSSSE), 286–291 (VSSSSE), 292–297 (VSSSSE), 298–303 (VSSSSE), 304–309 (VSSSSQ), 317–322 (VSSSSE), 324–329 (VSSSSE), 330–335 (VSSSSE), 336–341 (VSSSSE), 343–348 (VSSSSE), 349–354 (VSSSSE), 355–360 (VSSSSE), 361–366 (VSSSSQ), 374–379 (VSSSSE), 380–385 (VSSSSS), 388–393 (VSSSSE), 394–399 (VSSSSE), 401–406 (VSSSSE), 407–412 (VSSSSE), 413–418 (VSSSSE), 419–424 (VSSSSE), 425–430 (VSSSSE), 431–436 (VSSSSQ), 444–449 (VSSSSE), 450–455 (VSSSSE), 457–462 (VSSSSE), 463–468 (VSSSSE), 469–474 (VSSSSE), 475–480 (VSSSSQ), 488–493 (VSSSSE), 494–500 (VSSSSSE), 502–507 (VSSSSE), 508–513 (VSSSSE), 515–520 (VSSSSE), 521–526 (VSSSSE), 527–532 (VSSSSE), 533–538 (VSSSSQ), 546–551 (VSSSSE), 552–557 (VSSSSS), 560–565 (VSSSSE), 566–571 (VSSSSE), 573–578 (VSSSSE), 579–584 (VSSSSE), 585–590 (VSSSSE), 591–596 (VSSSSQ), 604–609 (VSSSSE), 611–616 (VSSSSE), 617–622 (VSSSSE), 623–628 (VSSSSE), 629–634 (VSSSSE), 635–640 (VSSSSE), 641–646 (VSSSSQ), 654–659 (VSSSSE), 660–665 (VSSSSS), 668–673 (VSSSSE), 674–679 (VSSSSE), 681–686 (VSSSSE), 687–692 (VSSSSE), 693–698 (VSSSSE), 699–704 (VSSSSQ), 712–717 (VSSSSE), 719–724 (VSSSSE), 725–730 (VSSSSE), 731–736 (VSSSSE), 737–742 (VSSSSE), 743–748 (VSSSSE), 749–754 (VSSSSE), 771–776 (VTSSSE), 777–782 (VSSSSQ), and 797–802 (VSSSSE). Residues 104–541 (VSSSSSEVIS…EVSSSSQVTS (438 aa)) are 88 X 6 AA approximate tandem repeats. The disordered stretch occupies residues 113–833 (SSSSEEASSS…VSSSSASSEV (721 aa)). An N-linked (GlcNAc...) asparagine glycan is attached at N817. One copy of the 1-88 repeat lies at 824–829 (VSSSSA). N-linked (GlcNAc...) asparagine glycans are attached at residues N994 and N1074. The GPI-anchor amidated asparagine moiety is linked to residue N1382. Positions 1383–1404 (AASRQSFNYKFIVGLILAYIIA) are cleaved as a propeptide — removed in mature form.

The protein localises to the cell membrane. In terms of biological role, predicted GPI-anchored adhesin-like protein which may be involved in filamentous growth and chlamydospore formation. The sequence is that of Probable GPI-anchored adhesin-like protein PGA55 (PGA55) from Candida albicans (strain SC5314 / ATCC MYA-2876) (Yeast).